Reading from the N-terminus, the 486-residue chain is Histidine--tRNA ligase, chloroplastic/mitochondrial (486 aa).

This sequence belongs to the class-II aminoacyl-tRNA synthetase family.

The protein localises to the plastid. It is found in the chloroplast. The protein resides in the mitochondrion. It catalyses the reaction tRNA(His) + L-histidine + ATP = L-histidyl-tRNA(His) + AMP + diphosphate + H(+). This is Histidine--tRNA ligase, chloroplastic/mitochondrial from Arabidopsis thaliana (Mouse-ear cress).